A 155-amino-acid chain; its full sequence is Ribonuclease H (155 aa).

The RNase H type-1 domain occupies 1 to 142 (MLKQVEIFTD…CDELARAAAM (142 aa)). Mg(2+) contacts are provided by aspartate 10, glutamate 48, aspartate 70, and aspartate 134.

The protein belongs to the RNase H family. In terms of assembly, monomer. Requires Mg(2+) as cofactor.

The protein resides in the cytoplasm. It catalyses the reaction Endonucleolytic cleavage to 5'-phosphomonoester.. Its function is as follows. Endonuclease that specifically degrades the RNA of RNA-DNA hybrids. The protein is Ribonuclease H of Citrobacter koseri (strain ATCC BAA-895 / CDC 4225-83 / SGSC4696).